Here is a 620-residue protein sequence, read N- to C-terminus: 1-deoxy-D-xylulose-5-phosphate synthase (620 aa).

Residues His80 and 121-123 contribute to the thiamine diphosphate site; that span reads GHS. A Mg(2+)-binding site is contributed by Asp152. Thiamine diphosphate contacts are provided by residues 153-154, Asn181, Tyr288, and Glu370; that span reads GA. Asn181 provides a ligand contact to Mg(2+).

The protein belongs to the transketolase family. DXPS subfamily. As to quaternary structure, homodimer. Mg(2+) is required as a cofactor. It depends on thiamine diphosphate as a cofactor.

The catalysed reaction is D-glyceraldehyde 3-phosphate + pyruvate + H(+) = 1-deoxy-D-xylulose 5-phosphate + CO2. It participates in metabolic intermediate biosynthesis; 1-deoxy-D-xylulose 5-phosphate biosynthesis; 1-deoxy-D-xylulose 5-phosphate from D-glyceraldehyde 3-phosphate and pyruvate: step 1/1. Catalyzes the acyloin condensation reaction between C atoms 2 and 3 of pyruvate and glyceraldehyde 3-phosphate to yield 1-deoxy-D-xylulose-5-phosphate (DXP). This Cronobacter sakazakii (strain ATCC BAA-894) (Enterobacter sakazakii) protein is 1-deoxy-D-xylulose-5-phosphate synthase.